Here is a 473-residue protein sequence, read N- to C-terminus: Photosystem II CP43 reaction center protein (473 aa).

A propeptide spanning residues 1–14 is cleaved from the precursor; the sequence is MKTLYSLRRSYPVE. An N-acetylthreonine modification is found at Thr15. Thr15 carries the post-translational modification Phosphothreonine. 5 helical membrane-spanning segments follow: residues 69 to 93, 134 to 155, 178 to 200, 255 to 275, and 291 to 312; these read LFEV…PHLA, LIGP…KDKN, KALY…RKIT, KPFA…LSYS, and WFNN…ASQA. Glu367 provides a ligand contact to [CaMn4O5] cluster. Residues 447–471 traverse the membrane as a helical segment; the sequence is RARAAAAGFEKGIDRDTEPVLFMNP.

Belongs to the PsbB/PsbC family. PsbC subfamily. In terms of assembly, PSII is composed of 1 copy each of membrane proteins PsbA, PsbB, PsbC, PsbD, PsbE, PsbF, PsbH, PsbI, PsbJ, PsbK, PsbL, PsbM, PsbT, PsbX, PsbY, PsbZ, Psb30/Ycf12, at least 3 peripheral proteins of the oxygen-evolving complex and a large number of cofactors. It forms dimeric complexes. Requires Binds multiple chlorophylls and provides some of the ligands for the Ca-4Mn-5O cluster of the oxygen-evolving complex. It may also provide a ligand for a Cl- that is required for oxygen evolution. PSII binds additional chlorophylls, carotenoids and specific lipids. as cofactor.

The protein localises to the plastid. It is found in the chloroplast thylakoid membrane. Its function is as follows. One of the components of the core complex of photosystem II (PSII). It binds chlorophyll and helps catalyze the primary light-induced photochemical processes of PSII. PSII is a light-driven water:plastoquinone oxidoreductase, using light energy to abstract electrons from H(2)O, generating O(2) and a proton gradient subsequently used for ATP formation. This Zygnema circumcarinatum (Green alga) protein is Photosystem II CP43 reaction center protein.